Reading from the N-terminus, the 562-residue chain is NRAMP-like transporter smf-1 (562 aa).

Over 1 to 55 (MASSNNDGPIEPEAEPWRITQNDHLEQDLLEEDAESQERVDIPVDDVEKAFSFKK) the chain is Cytoplasmic. A helical transmembrane segment spans residues 56-76 (LWAFTGPGFLMSIAYLDPGNI). At 77–83 (ESDLQSG) the chain is on the extracellular side. A helical membrane pass occupies residues 84-104 (AQAAYKLLWVLLSAHIIGMLL). Residues 105–140 (QRMSARLGVVSGKHMAEVAYQFYPRLPRIILWLMIE) lie on the Cytoplasmic side of the membrane. A helical transmembrane segment spans residues 141-161 (IAIVCSDMQEVIGTAIAIFLL). Topologically, residues 162–164 (SKG) are extracellular. Residues 165-185 (FVPLYVGVFITILDTFTFLLI) traverse the membrane as a helical segment. The Cytoplasmic segment spans residues 186–194 (DRYGIRKLE). The chain crosses the membrane as a helical span at residues 195-215 (LIFGFLILTMTVSFGYEFVVV). Residues 216-241 (KPPIGEVISGMVVPWCAGCGKGEFMQ) are Extracellular-facing. A helical transmembrane segment spans residues 242 to 262 (AISVVGAVIMPHNLYLHSALV). Residues 263-287 (KSRRVDRKDRRRVAEANKYFTLESA) are Cytoplasmic-facing. A helical membrane pass occupies residues 288–308 (IALFLSFFINLFVVAVFAHGL). Over 309–347 (YQKTNADVREMCIARHDIPDADIFPNNTEPVEVDIYKGG) the chain is Extracellular. N-linked (GlcNAc...) asparagine glycosylation is present at N334. A helical transmembrane segment spans residues 348–368 (IYLGCQFGAIAMFIWGIGIFA). Topologically, residues 369–398 (AGQSSTMTGTYTGQFVMEGFVKIEWPKWKR) are cytoplasmic. Residues 399-419 (VLITRAIAITPTLVLTFYSQG) traverse the membrane as a helical segment. Residues 420 to 428 (VQNLTGMND) lie on the Extracellular side of the membrane. A glycan (N-linked (GlcNAc...) asparagine) is linked at N422. The chain crosses the membrane as a helical span at residues 429 to 449 (FLNCVQMIQLPFALIPIITFT). Over 450–462 (SSRKIMHDFRSSK) the chain is Cytoplasmic. Residues 463–483 (VFQIFALITSALILSINVYFI) form a helical membrane-spanning segment. At 484–496 (SDYVFSRLGSEWY) the chain is on the extracellular side. The helical transmembrane segment at 497–517 (IIMVLAPITFAYVLFVLYLAL) threads the bilayer. The Cytoplasmic portion of the chain corresponds to 518 to 562 (YCLVSCEIIPDTVSIRGFSFNKSYENDAPWLAVDSSAVHDNAGYQ).

This sequence belongs to the NRAMP family. In terms of tissue distribution, expressed in dopaminergic neurons (at protein level). Expressed predominantly in anterior and posterior intestine, rectal gland cell, H-shaped excretory cell, vulva cells, proximal uterus and spermatheca in adults. Weakly expressed in hyp7 hypodermis, pharyngeal muscles and some anterior sensory, ring and posterior head neurons in adults. Expressed in the anchor cell at the larval stage.

It is found in the apical cell membrane. It localises to the cytoplasmic vesicle membrane. Its function is as follows. Probable divalent metal ion transporter which regulates Mn(2+) uptake. The chain is NRAMP-like transporter smf-1 (smf-1) from Caenorhabditis elegans.